A 283-amino-acid chain; its full sequence is NAD kinase (283 aa).

The active-site Proton acceptor is D61. NAD(+) is bound by residues 61 to 62 (DG), 134 to 135 (ND), R145, D164, 175 to 180 (TAYNLS), and Q234.

Belongs to the NAD kinase family. Requires a divalent metal cation as cofactor.

It localises to the cytoplasm. The catalysed reaction is NAD(+) + ATP = ADP + NADP(+) + H(+). Functionally, involved in the regulation of the intracellular balance of NAD and NADP, and is a key enzyme in the biosynthesis of NADP. Catalyzes specifically the phosphorylation on 2'-hydroxyl of the adenosine moiety of NAD to yield NADP. In Clostridium kluyveri (strain NBRC 12016), this protein is NAD kinase.